The chain runs to 631 residues: BTB/POZ domain-containing protein At1g67900 (631 aa).

Residues 28-93 enclose the BTB domain; sequence SDFTIEVSGS…CYGITITISA (66 aa). An NPH3 domain is found at 200–509; the sequence is GWWAEDIAEL…VQVLFYEQAR (310 aa). The interval 361 to 399 is disordered; sequence QTSPPTSPLRGKKGMMDRRRRSRSAENIDLEFQESRRSS. Residues 370–382 show a composition bias toward basic residues; it reads RGKKGMMDRRRRS. Tyrosine 450 carries the phosphotyrosine modification. Phosphoserine is present on serine 567.

This sequence belongs to the NPH3 family.

The protein operates within protein modification; protein ubiquitination. May act as a substrate-specific adapter of an E3 ubiquitin-protein ligase complex (CUL3-RBX1-BTB) which mediates the ubiquitination and subsequent proteasomal degradation of target proteins. This Arabidopsis thaliana (Mouse-ear cress) protein is BTB/POZ domain-containing protein At1g67900.